We begin with the raw amino-acid sequence, 121 residues long: uncharacterized protein (121 aa).

The segment at 20-98 (NEVRTSQSEV…PYYHGSKAST (79 aa)) is disordered. Basic and acidic residues predominate over residues 35-51 (KKSDNGEKDEKEEKELN).

This is an uncharacterized protein from Invertebrate iridescent virus 6 (IIV-6).